A 160-amino-acid chain; its full sequence is Fimbrial protein (160 aa).

A propeptide spans 1–7 (leader sequence); sequence MKSLQKG. Phe-8 is subject to N-methylphenylalanine. A helical transmembrane segment spans residues 8-28; that stretch reads FTLIELMIVVAIIGILAAFAI.

Belongs to the N-Me-Phe pilin family. The pili are polar flexible filaments of about 5.4 nanometers diameter and 2.5 micrometers average length; they consist of only a single polypeptide chain arranged in a helical configuration of five subunits per turn in the assembled pilus.

It is found in the fimbrium. It localises to the membrane. The polypeptide is Fimbrial protein (fimA) (Dichelobacter nodosus (Bacteroides nodosus)).